The sequence spans 416 residues: Homeobox even-skipped homolog protein 1 (416 aa).

2 disordered regions span residues 30 to 120 and 138 to 178; these read AVSS…SDFY and YQHS…LACS. The span at 72–82 shows a compositional bias: low complexity; that stretch reads GLAGSAAGLGA. Residues 102–114 are compositionally biased toward polar residues; sequence DSLSGQGQPSSSD. Residues 183–242 constitute a DNA-binding region (homeobox); sequence MRRYRTAFTREQIARLEKEFYRENYVSRPRRCELAAALNLPETTIKVWFQNRRMKDKRQR.

It belongs to the even-skipped homeobox family.

It localises to the nucleus. Its function is as follows. May play a role in the specification of neuronal cell types. May play a role in the dorsoventral specification of mesodermal cell fate. In Mus musculus (Mouse), this protein is Homeobox even-skipped homolog protein 1 (Evx1).